Reading from the N-terminus, the 454-residue chain is DNA-binding protein BIN4 (454 aa).

Disordered regions lie at residues 24 to 53 (LLSL…DDGD), 103 to 249 (AGKE…DKDT), and 380 to 454 (TFES…KAKK). Residues 112–123 (DCEKLSSKHKDA) are compositionally biased toward basic and acidic residues. Polar residues predominate over residues 132 to 150 (LVSSDSEPSSPIKQEVTVS). Over residues 229-249 (TPKEENCAQEILKTEDKDKDT) the composition is skewed to basic and acidic residues. Residues 438–454 (PAKKARNSAPKKPKAKK) are compositionally biased toward basic residues.

Interacts with TOP6A, RHL1 and itself, but not with TOP6B. As to expression, expressed in expanding cotyledons, vascular cells, elongating root cells, developing leaf trichomes, root and apical meristems and lateral root primordia.

The protein resides in the nucleus. Its function is as follows. Component of the DNA topoisomerase VI complex. Binds to DNA. Required for chromatin organization and progression of endoreduplication cycles. The loss of BIN4 activates the ATM- and ATR-dependent DNA damage responses in postmitotic cells and induces the ectopic expression of the mitotic G2/M-specific cyclin B1;1 gene in non-dividing cells. This Arabidopsis thaliana (Mouse-ear cress) protein is DNA-binding protein BIN4 (BIN4).